The following is a 993-amino-acid chain: Signal peptide, CUB and EGF-like domain-containing protein 3 (993 aa).

Residues 1–20 form the signal peptide; that stretch reads MGSGRVPGLCLLLLLVHARA. Residues 29–69 enclose the EGF-like 1; calcium-binding domain; that stretch reads DVDECVEGTDNCHIDAICQNTPRSYKCICKSGYTGDGKHCK. 26 cysteine pairs are disulfide-bonded: C33-C46, C40-C55, C57-C68, C74-C86, C82-C95, C97-C110, C116-C127, C123-C136, C161-C172, C168-C182, C184-C197, C201-C212, C208-C221, C223-C236, C240-C251, C247-C260, C262-C275, C281-C292, C288-C301, C303-C316, C322-C332, C328-C341, C343-C355, C361-C372, C368-C381, and C383-C397. The region spanning 70–111 is the EGF-like 2; calcium-binding domain; it reads DVDECEREDNAGCVHDCVNIPGNYRCTCYDGFHLAHDGHNCL. An EGF-like 3; calcium-binding domain is found at 112-148; the sequence is DVDECAEGNGGCQQSCVNMMGSYECHCRDGFFLSDNQ. EGF-like domains are found at residues 157-198, 199-237, and 238-276; these read EGMN…RDCK, LTCNYGNGGCQHTCDDTEQGPRCGCHVKFVLHTDGKTCI, and ETCAVNNGGCDSKCHDAATGVHCSCPVGFMLQPDRKTCK. The EGF-like 7; calcium-binding domain maps to 277–317; that stretch reads DIDECRLNNGGCDHICRNTVGSFECSCKKGYKLLINERSCQ. An EGF-like 8; calcium-binding domain is found at 318–356; the sequence is DIDECSFDRTCDHMCVNTPGSFQCLCHRGYLLYGVTHCG. The EGF-like 9; calcium-binding domain maps to 357–398; the sequence is DVDECSINKGGCRFGCINTPGSYQCTCPAGQGRLHWNGKDCT. Residues N417, N464, N685, N756, and N785 are each glycosylated (N-linked (GlcNAc...) asparagine). 2 disulfide bridges follow: C804-C830 and C857-C878. A CUB domain is found at 804–916; sequence CGGELGEFTG…RGFQIPYVTY (113 aa).

As to quaternary structure, forms homooligomers. Forms heterooligomers with SCUBE1 and SCUBE2. Interacts with TGFBR2 through the CUB domain; this interaction does not affect TGFB1-binding to TGFBR2. Interacts with BMP2, BMP4 and BMP7; the interaction is mediated by the CUB domain. Interacts with BMPR1A, BMPR1B and BMPR2; the interaction with BMPR1A and BMPR1B is BMP2- and BMP4-dependent. In terms of processing, N-glycosylated. Proteolytic cleavage produces a CUB-containing C-terminal fragment that retains the ability to bind to TGFBR2. This reaction is catalyzed in vitro by MMP2 and, to a lesser extent, by MMP9. As to expression, highly expressed in femur and humerus with little or no expression in non-bone tissues.

The protein localises to the secreted. The protein resides in the cell surface. In terms of biological role, is a positive regulator of the BMP signaling pathway, required for proper chondrogenesis, osteogenesis and skeletal development. It acts as a coreceptor for BMP ligands, particularly BMP2 and BMP4, facilitating their interactions with BMP type I receptors. It is required for ligand-induced recruitment of BMP receptors to lipid rafts. Binds to TGFBR2 and activates TGFB signaling. This is Signal peptide, CUB and EGF-like domain-containing protein 3 from Mus musculus (Mouse).